A 453-amino-acid polypeptide reads, in one-letter code: uncharacterized protein (453 aa).

2 disordered regions span residues 15–42 and 425–453; these read LKRKQPSTSFNGKRKRTSSGLIEKSETM and TNEISSSNNSGTAKNKNNQNRKRNRRHAK. Positions 425–437 are enriched in polar residues; it reads TNEISSSNNSGTA. Residues 443–453 are compositionally biased toward basic residues; the sequence is QNRKRNRRHAK.

This is an uncharacterized protein from Caenorhabditis elegans.